The sequence spans 422 residues: Gamma-glutamyl phosphate reductase (422 aa).

It belongs to the gamma-glutamyl phosphate reductase family.

Its subcellular location is the cytoplasm. It catalyses the reaction L-glutamate 5-semialdehyde + phosphate + NADP(+) = L-glutamyl 5-phosphate + NADPH + H(+). The protein operates within amino-acid biosynthesis; L-proline biosynthesis; L-glutamate 5-semialdehyde from L-glutamate: step 2/2. Its function is as follows. Catalyzes the NADPH-dependent reduction of L-glutamate 5-phosphate into L-glutamate 5-semialdehyde and phosphate. The product spontaneously undergoes cyclization to form 1-pyrroline-5-carboxylate. This Shewanella piezotolerans (strain WP3 / JCM 13877) protein is Gamma-glutamyl phosphate reductase.